Reading from the N-terminus, the 125-residue chain is S-adenosylmethionine decarboxylase proenzyme (125 aa).

Serine 61 functions as the Schiff-base intermediate with substrate; via pyruvic acid in the catalytic mechanism. Pyruvic acid (Ser); by autocatalysis is present on serine 61. Residue histidine 66 is the Proton acceptor; for processing activity of the active site. Cysteine 81 acts as the Proton donor; for catalytic activity in catalysis.

Belongs to the prokaryotic AdoMetDC family. Type 1 subfamily. Heterotetramer of two alpha and two beta chains arranged as a dimer of alpha/beta heterodimers. It depends on pyruvate as a cofactor. Is synthesized initially as an inactive proenzyme. Formation of the active enzyme involves a self-maturation process in which the active site pyruvoyl group is generated from an internal serine residue via an autocatalytic post-translational modification. Two non-identical subunits are generated from the proenzyme in this reaction, and the pyruvate is formed at the N-terminus of the alpha chain, which is derived from the carboxyl end of the proenzyme. The post-translation cleavage follows an unusual pathway, termed non-hydrolytic serinolysis, in which the side chain hydroxyl group of the serine supplies its oxygen atom to form the C-terminus of the beta chain, while the remainder of the serine residue undergoes an oxidative deamination to produce ammonia and the pyruvoyl group blocking the N-terminus of the alpha chain.

It catalyses the reaction S-adenosyl-L-methionine + H(+) = S-adenosyl 3-(methylsulfanyl)propylamine + CO2. It participates in amine and polyamine biosynthesis; S-adenosylmethioninamine biosynthesis; S-adenosylmethioninamine from S-adenosyl-L-methionine: step 1/1. Its function is as follows. Catalyzes the decarboxylation of S-adenosylmethionine to S-adenosylmethioninamine (dcAdoMet), the propylamine donor required for the synthesis of the polyamines spermine and spermidine from the diamine putrescine. The sequence is that of S-adenosylmethionine decarboxylase proenzyme from Prochlorococcus marinus (strain MIT 9313).